The following is a 144-amino-acid chain: Hexon-interlacing protein (144 aa).

The stretch at 106-133 (LTVMLAKLETLTAQLEELSQKVEELADA) forms a coiled coil.

The protein belongs to the adenoviridae hexon-interlacing protein family. In terms of assembly, homotrimer. Interacts with hexon protein; this interaction tethers the hexons together. Self-interacts with adjacent proteins. Interacts with kinesin light chain KLC1; this interaction leads to capsid disruption at the nuclear pore complex during virus entry into host cell.

It localises to the virion. Its subcellular location is the host nucleus. Its function is as follows. Structural component of the virion that acts as a cement protein on the capsid exterior and forms triskelion structures consisting of three molecules that stabilize three hexon trimers at the center of each icosahedral facet and fixes the peripentonal hexons. Dispensable for assembly. During virus entry, recruits the anterograde motor kinesin-1 to the capsid docked at the nuclear pore complex thereby subjecting the docked capsid to a pulling force. The resulting tension leads to capsid disruption, dispersion of capsid fragments toward cell periphery and eventually viral DNA entry into the host nucleus. This Homo sapiens (Human) protein is Hexon-interlacing protein.